Reading from the N-terminus, the 1742-residue chain is Kinase non-catalytic C-lobe domain-containing protein 1 (1742 aa).

Residues 37–217 (VSLADILSLR…QELSENTWRG (181 aa)) enclose the KIND 1 domain. Disordered stretches follow at residues 215 to 288 (WRGR…EGLA) and 365 to 455 (FKTQ…TEQS). Residue S267 is modified to Phosphoserine. Over residues 403-412 (LEASSPSQGS) the composition is skewed to polar residues. The span at 426–445 (DSDHEGHIPRSEEKIPEESR) shows a compositional bias: basic and acidic residues. A KIND 2 domain is found at 456-620 (LSLKDLLSKL…RASTCKVHPE (165 aa)). 4 disordered regions span residues 703 to 727 (DQLA…REGT), 744 to 876 (SNQL…KMTA), 948 to 1006 (GPAS…LSDI), and 1028 to 1076 (VTRE…ASDF). Residues 711-727 (SNEKPKEGSGHLDREGT) show a composition bias toward basic and acidic residues. Over residues 755-771 (GATPDPDGDSGSPSSAT) the composition is skewed to low complexity. Polar residues predominate over residues 782-791 (VTQQKGTSGT). Residues 847–861 (SDGHPEKPRPADRKL) show a composition bias toward basic and acidic residues. Residues 949–965 (PASPSESTSEEPGSQPE) are compositionally biased toward low complexity. S951 carries the post-translational modification Phosphoserine. The segment covering 1043–1053 (GPSQDSTSHAS) has biased composition (polar residues). The stretch at 1112 to 1177 (HTELEAQSPE…EMKSKVQFLS (66 aa)) forms a coiled coil. The N-terminal Ras-GEF domain occupies 1239-1367 (KARILQAGTP…ALLEVGTERR (129 aa)). In terms of domain architecture, Ras-GEF spans 1461 to 1712 (STNQLFTQLT…SGADVSILAA (252 aa)).

In terms of assembly, interacts (via KIND2) with MAP2; the interaction enhances MAP2 phosphorylation and localizes KNDC1 to dendrites. In terms of tissue distribution, highly expressed in the brain and at low levels in the ovary. In the brain it is most prominently expressed in the cerebellum where it is restricted to the granular Purkinje cell layer.

The protein localises to the cell projection. It is found in the dendrite. It localises to the perikaryon. Functionally, RAS-Guanine nucleotide exchange factor (GEF) that controls the negative regulation of neuronal dendrite growth by mediating a signaling pathway linking RAS and MAP2. May be involved in cellular senescence. The sequence is that of Kinase non-catalytic C-lobe domain-containing protein 1 from Mus musculus (Mouse).